The chain runs to 218 residues: Cytochrome b6 (218 aa).

Residues 35–55 (IFYCLGGITLVCFLIQFATGF) form a helical membrane-spanning segment. Cys-38 is a binding site for heme c. Heme b contacts are provided by His-89 and His-103. 3 helical membrane passes run 93–113 (ASMM…TGGF), 119–139 (LTWV…VTGY), and 189–209 (LHTF…FLMI). 2 residues coordinate heme b: His-190 and His-205.

Belongs to the cytochrome b family. PetB subfamily. In terms of assembly, the 4 large subunits of the cytochrome b6-f complex are cytochrome b6, subunit IV (17 kDa polypeptide, PetD), cytochrome f and the Rieske protein, while the 4 small subunits are PetG, PetL, PetM and PetN. The complex functions as a dimer. Requires heme b as cofactor. The cofactor is heme c.

The protein resides in the cellular thylakoid membrane. Component of the cytochrome b6-f complex, which mediates electron transfer between photosystem II (PSII) and photosystem I (PSI), cyclic electron flow around PSI, and state transitions. This Synechococcus sp. (strain RCC307) protein is Cytochrome b6.